The sequence spans 208 residues: Non-specific lipid transfer protein GPI-anchored 4 (208 aa).

An N-terminal signal peptide occupies residues 1 to 25 (MKQSLLLSFVLLLLSSSSLVTPIHA). Asn27, Asn67, and Asn105 each carry an N-linked (GlcNAc...) asparagine glycan. 4 disulfide bridges follow: Cys48-Cys91, Cys58-Cys75, Cys76-Cys116, and Cys89-Cys125. The interval 136–181 (GASPVSPSAGAPTTSPSAAKSPETSATSPSSDETPSMTAPSPSSSG) is disordered. Ser179 carries GPI-anchor amidated serine lipidation. Residues 180 to 208 (SGTNILSVPALTIVFVIVSSVAYISAFSN) constitute a propeptide, removed in mature form.

It belongs to the plant LTP family. As to expression, confined to the anthers and stamen of the inflorescence, especially in pollen.

The protein resides in the cell membrane. Lipid transfer protein involved in seed and ovule maturation and development, probably by regulating the fatty acids homeostasis during suberin and sporopollenin biosynthesis or deposition. This Arabidopsis thaliana (Mouse-ear cress) protein is Non-specific lipid transfer protein GPI-anchored 4.